Here is a 291-residue protein sequence, read N- to C-terminus: Small ribosomal subunit biogenesis GTPase RsgA (291 aa).

Residues K63–L221 enclose the CP-type G domain. Residues T112–D115 and G164–T172 each bind GTP. Positions 245, 250, 252, and 258 each coordinate Zn(2+).

Belongs to the TRAFAC class YlqF/YawG GTPase family. RsgA subfamily. In terms of assembly, monomer. Associates with 30S ribosomal subunit, binds 16S rRNA. It depends on Zn(2+) as a cofactor.

It is found in the cytoplasm. Functionally, one of several proteins that assist in the late maturation steps of the functional core of the 30S ribosomal subunit. Helps release RbfA from mature subunits. May play a role in the assembly of ribosomal proteins into the subunit. Circularly permuted GTPase that catalyzes slow GTP hydrolysis, GTPase activity is stimulated by the 30S ribosomal subunit. The chain is Small ribosomal subunit biogenesis GTPase RsgA from Staphylococcus saprophyticus subsp. saprophyticus (strain ATCC 15305 / DSM 20229 / NCIMB 8711 / NCTC 7292 / S-41).